The chain runs to 330 residues: 2-keto-3-deoxygluconate permease (330 aa).

10 helical membrane-spanning segments follow: residues 10–30 (VPGGMMIIPLFLGAALNTFAP), 42–62 (ALITGTLPILGVFIFCVGATI), 77–97 (LLLGKIGFAALLGVIAAQFIP), 100–120 (GIQSGFFAGLSVLAIVAVMNE), 140–160 (GAFAFISTESGPFMTMVTFGV), 163–183 (LAAFPWETLAATVIPFLLGCI), 200–220 (PAIIPFFAFSLGNTLNFGMLI), 224–244 (LLGIFIGVSVVILSGSSLFLL), 254–274 (VAGVAASSTAGAAVAVPYALA), and 289–309 (AIIATSVIVTSLLTPLATVWV).

It belongs to the KdgT transporter family.

The protein localises to the cell membrane. The catalysed reaction is 2-dehydro-3-deoxy-D-gluconate(in) + H(+)(in) = 2-dehydro-3-deoxy-D-gluconate(out) + H(+)(out). Its function is as follows. Catalyzes the proton-dependent uptake of 2-keto-3-deoxygluconate (KDG) into the cell. The polypeptide is 2-keto-3-deoxygluconate permease (Bacillus subtilis (strain 168)).